The sequence spans 826 residues: DEAD-box ATP-dependent RNA helicase 13 (826 aa).

Residues 1-10 (MVTGDKESSL) show a composition bias toward basic and acidic residues. Disordered stretches follow at residues 1–62 (MVTG…QLDG) and 76–175 (HLTL…GDDT). Over residues 11–22 (MKKRNKRSHKRK) the composition is skewed to basic residues. A compositionally biased stretch (polar residues) spans 49–58 (SFSTLFSGSG). Acidic residues predominate over residues 94–128 (EDDDDTNETVDEMIEGEEAEEDGEGRDDEDDEDDE). Positions 125–166 (EDDEETRKKKEKKAKRNKEKKKEKKKKKQKKINEAAKNQDAS) form a coiled coil. Residues 133 to 154 (KKEKKAKRNKEKKKEKKKKKQK) are compositionally biased toward basic residues. Residues 190–218 (SAWSSMRLHPLLMKSIYRLDFKEPTKIQK) carry the Q motif motif. The 218-residue stretch at 222-439 (NVAAYQGKDV…KLKRGSSKSK (218 aa)) folds into the Helicase ATP-binding domain. Residue 235–242 (AETGSGKT) participates in ATP binding. The DEAD box motif lies at 363 to 366 (DEAD). The 169-residue stretch at 476–644 (KIEESFIKCE…YMPAVRKRLY (169 aa)) folds into the Helicase C-terminal domain. Coiled coils occupy residues 666 to 712 (LKKH…TLLS) and 783 to 810 (KMKGQSAEKRRDIASLKKKRKEEKIGRR). Positions 783 to 826 (KMKGQSAEKRRDIASLKKKRKEEKIGRRDQRRNQKKQRKLMASS) are disordered. 2 stretches are compositionally biased toward basic and acidic residues: residues 788 to 797 (SAEKRRDIAS) and 804 to 814 (EEKIGRRDQRR). Positions 815-826 (NQKKQRKLMASS) are enriched in basic residues.

This sequence belongs to the DEAD box helicase family. DDX24/MAK5 subfamily.

It catalyses the reaction ATP + H2O = ADP + phosphate + H(+). This chain is DEAD-box ATP-dependent RNA helicase 13 (RH13), found in Arabidopsis thaliana (Mouse-ear cress).